We begin with the raw amino-acid sequence, 862 residues long: Active breakpoint cluster region-related protein (862 aa).

The disordered stretch occupies residues 29–84; it reads YDAEGNEEHKNSREGSETMPYIDESPTMSPQLSARSQDSVDGVSPTPTEVLLPGGE. A compositionally biased stretch (basic and acidic residues) spans 34 to 44; it reads NEEHKNSREGS. Polar residues predominate over residues 54–67; it reads PTMSPQLSARSQDS. Positions 93-286 constitute a DH domain; it reads MRKLVLSGVL…QNFLSSINED (194 aa). A PH domain is found at 303-462; that stretch reads QLVKDGFLVE…WREAIQKLQK (160 aa). The C2 domain occupies 488–616; that stretch reads VHNVPIISHK…QSKNWHDDVI (129 aa). The Rho-GAP domain occupies 650 to 848; the sequence is VKISVVTKRE…YYLQHPPISF (199 aa).

Its subcellular location is the cell projection. It localises to the dendritic spine. The protein localises to the axon. The protein resides in the synapse. Functionally, protein with a unique structure having two opposing regulatory activities toward small GTP-binding proteins. The C-terminus is a GTPase-activating protein domain which stimulates GTP hydrolysis by RAC1, RAC2 and CDC42. Accelerates the intrinsic rate of GTP hydrolysis of RAC1 or CDC42, leading to down-regulation of the active GTP-bound form. The central Dbl homology (DH) domain functions as guanine nucleotide exchange factor (GEF) that modulates the GTPases CDC42, RHOA and RAC1. Promotes the conversion of CDC42, RHOA and RAC1 from the GDP-bound to the GTP-bound form. This chain is Active breakpoint cluster region-related protein (abr), found in Xenopus laevis (African clawed frog).